The sequence spans 185 residues: Large ribosomal subunit protein uL5 (185 aa).

Belongs to the universal ribosomal protein uL5 family. Part of the 50S ribosomal subunit; part of the 5S rRNA/L5/L18/L25 subcomplex. Contacts the 5S rRNA and the P site tRNA. Forms a bridge to the 30S subunit in the 70S ribosome.

In terms of biological role, this is one of the proteins that bind and probably mediate the attachment of the 5S RNA into the large ribosomal subunit, where it forms part of the central protuberance. In the 70S ribosome it contacts protein S13 of the 30S subunit (bridge B1b), connecting the 2 subunits; this bridge is implicated in subunit movement. Contacts the P site tRNA; the 5S rRNA and some of its associated proteins might help stabilize positioning of ribosome-bound tRNAs. In Streptomyces griseus subsp. griseus (strain JCM 4626 / CBS 651.72 / NBRC 13350 / KCC S-0626 / ISP 5235), this protein is Large ribosomal subunit protein uL5.